The primary structure comprises 192 residues: dCTP deaminase, dUMP-forming (192 aa).

DCTP contacts are provided by residues 101–106 (KSSLGR), aspartate 119, 127–129 (TLE), glutamine 148, tyrosine 162, and glutamine 174. Glutamate 129 acts as the Proton donor/acceptor in catalysis. A disordered region spans residues 165–184 (GAYGNRYQGQRGPTASRSHL). Residues 171-183 (YQGQRGPTASRSH) are compositionally biased toward polar residues.

The protein belongs to the dCTP deaminase family. Homotrimer.

The enzyme catalyses dCTP + 2 H2O = dUMP + NH4(+) + diphosphate. It functions in the pathway pyrimidine metabolism; dUMP biosynthesis; dUMP from dCTP: step 1/1. Functionally, bifunctional enzyme that catalyzes both the deamination of dCTP to dUTP and the hydrolysis of dUTP to dUMP without releasing the toxic dUTP intermediate. The sequence is that of dCTP deaminase, dUMP-forming from Kocuria rhizophila (strain ATCC 9341 / DSM 348 / NBRC 103217 / DC2201).